Consider the following 287-residue polypeptide: Membrane protein insertase YidC 2 (287 aa).

Positions 1–26 are cleaved as a signal peptide; that stretch reads MKKKKRFKQKLLIASLVIGLMAVLSG. Cysteine 27 carries N-palmitoyl cysteine lipidation. Cysteine 27 is lipidated: S-diacylglycerol cysteine. 5 helical membrane passes run 65 to 85, 135 to 155, 178 to 198, 207 to 224, and 228 to 250; these read YAVGIIVVTILIRLLIMPLMI, MMGCLPLLIQMPILLGFYQAI, YILPVVAALTTFLSSKISMMG, AMIVYIMPVMILFMGITL, and LALYWIIGNIFTVFQTLLINNPF.

This sequence belongs to the OXA1/ALB3/YidC family. Type 2 subfamily.

It localises to the cell membrane. Its function is as follows. Required for the insertion and/or proper folding and/or complex formation of integral membrane proteins into the membrane. Involved in integration of membrane proteins that insert both dependently and independently of the Sec translocase complex, as well as at least some lipoproteins. This Listeria monocytogenes serovar 1/2a (strain ATCC BAA-679 / EGD-e) protein is Membrane protein insertase YidC 2.